Here is a 779-residue protein sequence, read N- to C-terminus: Coenzyme PQQ synthesis protein F (779 aa).

His-57 is a binding site for Zn(2+). Glu-60 serves as the catalytic Proton acceptor. 2 residues coordinate Zn(2+): His-61 and Glu-138.

The protein belongs to the peptidase M16 family. The cofactor is Zn(2+).

Its pathway is cofactor biosynthesis; pyrroloquinoline quinone biosynthesis. Required for coenzyme pyrroloquinoline quinone (PQQ) biosynthesis. It is thought that this protein is a protease that cleaves peptides bond in a small peptide (gene pqqA), providing the glutamate and tyrosine residues which are necessary for the synthesis of PQQ. The sequence is that of Coenzyme PQQ synthesis protein F (pqqF) from Pseudomonas syringae pv. tomato (strain ATCC BAA-871 / DC3000).